We begin with the raw amino-acid sequence, 26 residues long: Delta-hemolysin (26 aa).

Methionine 1 carries the post-translational modification N-formylmethionine.

Belongs to the delta-lysin family.

Its subcellular location is the secreted. The protein resides in the host cell membrane. Lyses erythrocytes and many other mammalian cells. The chain is Delta-hemolysin (hld) from Staphylococcus aureus (strain MSSA476).